A 146-amino-acid polypeptide reads, in one-letter code: Snaclec stejaggregin-B subunit beta-1 (146 aa).

A signal peptide spans 1 to 23; that stretch reads MGRFIFVSFGLLVVFLSLSGTGA. 3 disulfides stabilise this stretch: C25–C36, C53–C142, and C119–C134. The C-type lectin domain maps to 32–143; the sequence is YDLYCYRVFQ…CSQTYPFVCK (112 aa).

The protein belongs to the snaclec family. Heteromultimer; disulfide-linked. In terms of tissue distribution, expressed by the venom gland.

The protein resides in the secreted. In terms of biological role, interferes with one step of hemostasis (modulation of platelet aggregation, or coagulation cascade, for example). The sequence is that of Snaclec stejaggregin-B subunit beta-1 from Trimeresurus stejnegeri (Chinese green tree viper).